The chain runs to 526 residues: D-arabinono-1,4-lactone oxidase (526 aa).

Residues 19–193 (YSAKPERYFQ…VSATIRVVPG (175 aa)) form the FAD-binding PCMH-type domain. At histidine 56 the chain carries Pros-8alpha-FAD histidine.

This sequence belongs to the oxygen-dependent FAD-linked oxidoreductase family. Monomer. FAD is required as a cofactor. The N-terminus is blocked.

The protein localises to the mitochondrion membrane. It catalyses the reaction D-arabinono-1,4-lactone + O2 = dehydro-D-arabinono-1,4-lactone + H2O2 + H(+). It functions in the pathway cofactor biosynthesis; D-erythroascorbate biosynthesis; dehydro-D-arabinono-1,4-lactone from D-arabinose: step 2/2. Its function is as follows. Can oxidize L-gulono-1,4-lactone as well as D-arabinono-1,4-lactone and L-galactono-1,4-lactone. In Saccharomyces cerevisiae (strain ATCC 204508 / S288c) (Baker's yeast), this protein is D-arabinono-1,4-lactone oxidase (ALO1).